Consider the following 151-residue polypeptide: Ubiquitin-conjugating enzyme E2 2 (151 aa).

Residues 4–150 (AARRRLMRDF…VRETVEKSWE (147 aa)) enclose the UBC core domain. C88 functions as the Glycyl thioester intermediate in the catalytic mechanism.

The protein belongs to the ubiquitin-conjugating enzyme family.

The protein localises to the cytoplasm. It localises to the nucleus. The catalysed reaction is S-ubiquitinyl-[E1 ubiquitin-activating enzyme]-L-cysteine + [E2 ubiquitin-conjugating enzyme]-L-cysteine = [E1 ubiquitin-activating enzyme]-L-cysteine + S-ubiquitinyl-[E2 ubiquitin-conjugating enzyme]-L-cysteine.. Its pathway is protein modification; protein ubiquitination. Functionally, catalyzes the covalent attachment of ubiquitin to other proteins. Plays a role in transcription regulation by catalyzing the monoubiquitination of histone H2B to form H2BK123ub1. H2BK123ub1 gives a specific tag for epigenetic transcriptional activation and is also a prerequisite for H3K4me and H3K79me formation. Also involved in postreplication repair of UV-damaged DNA, in N-end rule-dependent protein degradation and in sporulation. The protein is Ubiquitin-conjugating enzyme E2 2 (UBC2) of Fusarium solani (Filamentous fungus).